The chain runs to 685 residues: Putative alpha-1,3-mannosyltransferase MNN14 (685 aa).

Residues 1-13 lie on the Cytoplasmic side of the membrane; sequence MGLLSIPYQSKSK. Residues 14–34 traverse the membrane as a helical segment; sequence LWIAIFLVVWSLISMHFIWQS. Over 35-685 the chain is Lumenal; it reads QANSGLILKN…EIWMRGYNYL (651 aa). N-linked (GlcNAc...) asparagine glycosylation is found at Asn199, Asn338, Asn408, and Asn556.

The protein belongs to the MNN1/MNT family.

Its subcellular location is the golgi apparatus membrane. It participates in protein modification; protein glycosylation. Functionally, responsible for addition of the terminal mannose residues to the outer chain of core N-linked polysaccharides and to O-linked mannotriose. Implicated in late Golgi modifications. Involved in virulence. The protein is Putative alpha-1,3-mannosyltransferase MNN14 (MNN14) of Candida albicans (strain SC5314 / ATCC MYA-2876) (Yeast).